The primary structure comprises 90 residues: U7-theraphotoxin-Hhn1a 5 (90 aa).

The first 19 residues, 1–19, serve as a signal peptide directing secretion; that stretch reads MKTAIFTVVLALAVFAVLS. A propeptide spanning residues 20 to 50 is cleaved from the precursor; that stretch reads FGWEANEKALSEESTELIHEKEAASETEARE. Cystine bridges form between Cys-51-Cys-65, Cys-58-Cys-70, and Cys-64-Cys-81.

It belongs to the neurotoxin 10 (Hwtx-1) family. 13 (Hntx-13) subfamily. In terms of tissue distribution, expressed by the venom gland.

It localises to the secreted. Its function is as follows. Ion channel inhibitor. This is U7-theraphotoxin-Hhn1a 5 from Cyriopagopus hainanus (Chinese bird spider).